The primary structure comprises 322 residues: Adenine deaminase (322 aa).

Zn(2+) is bound by residues H11, H13, and H189. Residue E192 is the Proton donor of the active site. Position 270 (D270) interacts with Zn(2+). Residue D271 participates in substrate binding.

Belongs to the metallo-dependent hydrolases superfamily. Adenosine and AMP deaminases family. Adenine deaminase type 2 subfamily. Requires Zn(2+) as cofactor.

The enzyme catalyses adenine + H2O + H(+) = hypoxanthine + NH4(+). Catalyzes the hydrolytic deamination of adenine to hypoxanthine. Plays an important role in the purine salvage pathway and in nitrogen catabolism. The protein is Adenine deaminase of Rhizobium etli (strain ATCC 51251 / DSM 11541 / JCM 21823 / NBRC 15573 / CFN 42).